Consider the following 299-residue polypeptide: MQAIILGSAAGGGVPQWNCRCPHCTMAWAGDARVKPRTQSSLAVSPDGETWLLVNASPDIRQQLFATPALHPARGLRHSPIAAVLLTNGDVDHVAGLLTLRESQPFRLHATRNILDSVSANRVFDVLAPEHVARREVALDESFAPVPGLAVTLFAVPGKVPLWLEEGTPEIGQETETTVGALIEAGGKRLAYVPGCARVTDDLRRRLSGVDVLLFDGTVYLDDDMIRAGVGTKTGWRMGHVPMTGEGGAIAALAEVPIGRRIFVHINNTNPVLVEESEARRAVEAEGWTVAHDGLTLTL.

The protein belongs to the PqqB family.

It functions in the pathway cofactor biosynthesis; pyrroloquinoline quinone biosynthesis. Functionally, may be involved in the transport of PQQ or its precursor to the periplasm. This chain is Coenzyme PQQ synthesis protein B, found in Methylobacterium sp. (strain 4-46).